Consider the following 613-residue polypeptide: Methionine--tRNA ligase (613 aa).

A 'HIGH' region motif is present at residues 15–25 (PYANGPRHIGH). The Zn(2+) site is built by Cys-147, Cys-150, Cys-160, and Cys-163. The 'KMSKS' region motif lies at 351 to 355 (KFSSS). Ser-354 provides a ligand contact to ATP.

It belongs to the class-I aminoacyl-tRNA synthetase family. MetG type 1 subfamily. Monomer. It depends on Zn(2+) as a cofactor.

Its subcellular location is the cytoplasm. The catalysed reaction is tRNA(Met) + L-methionine + ATP = L-methionyl-tRNA(Met) + AMP + diphosphate. Functionally, is required not only for elongation of protein synthesis but also for the initiation of all mRNA translation through initiator tRNA(fMet) aminoacylation. This Corynebacterium efficiens (strain DSM 44549 / YS-314 / AJ 12310 / JCM 11189 / NBRC 100395) protein is Methionine--tRNA ligase.